A 228-amino-acid polypeptide reads, in one-letter code: uncharacterized protein (228 aa).

Disordered regions lie at residues Met1 to Phe62 and Ser160 to Val228. Positions Ala13–Ser33 are enriched in low complexity. Over residues Arg167–Pro176 the composition is skewed to polar residues.

This is an uncharacterized protein from Homo sapiens (Human).